Here is a 3175-residue protein sequence, read N- to C-terminus: Replicase polyprotein 1ab (3175 aa).

Residues Cys-25–Cys-44 form a C4-type; atypical zinc finger. The Peptidase C31 domain occupies Ser-66–Thr-156. Residues Asp-157–Gly-260 enclose the Peptidase C32 domain. Catalysis depends on for Nsp1 papain-like cysteine proteinase activity residues Cys-164 and His-230. Residues Gly-261–Lys-339 are OTU-like. One can recognise a Peptidase C33 domain in the interval Gly-261–Ser-360. Catalysis depends on Cys-270, which acts as the For Nsp2 cysteine proteinase activity. Cys-319 is a binding site for Zn(2+). Catalysis depends on His-332, which acts as the For Nsp2 cysteine proteinase activity. Residues Cys-349, Cys-354, and Cys-356 each coordinate Zn(2+). Positions Val-386–Glu-451 are disordered. Transmembrane regions (helical) follow at residues Ala-530–Ile-550, Gly-551–Asn-571, Phe-625–Leu-645, Leu-829–Thr-849, Tyr-903–Ile-923, Leu-935–Gly-955, and Leu-977–Leu-997. The segment at Ala-530–Leu-645 is HD1. Residues Leu-829 to Leu-997 form an HD2 region. The region spanning Gly-1065–Glu-1268 is the Peptidase S32 domain. Residues His-1103, Asp-1129, and Ser-1184 each act as charge relay system; for 3C-like serine proteinase activity in the active site. Helical transmembrane passes span Ala-1291–Gly-1311, Cys-1333–Ile-1353, Ala-1355–Val-1375, and Gly-1385–Gly-1405. Residues Ala-1291–Gly-1405 are HD3. The N-linked (GlcNAc...) asparagine; by host glycan is linked to Asn-1501. A disordered region spans residues Asn-1577–Asp-1614. The segment covering Glu-1600–Gly-1612 has biased composition (basic and acidic residues). Residues Leu-1716–Asp-1883 form the NiRAN domain. One can recognise a RdRp catalytic domain in the interval Lys-2116–Ser-2251. Residues Ser-2371–Pro-2438 form the AV ZBD domain. Residues Cys-2374, Cys-2377, Cys-2387, Cys-2392, Cys-2395, His-2399, His-2402, Cys-2403, Cys-2412, His-2414, Cys-2423, and Cys-2426 each contribute to the Zn(2+) site. In terms of domain architecture, (+)RNA virus helicase ATP-binding spans Pro-2496–Leu-2661. Gly-2528–Thr-2535 provides a ligand contact to ATP. The (+)RNA virus helicase C-terminal domain occupies Arg-2662–Glu-2793. One can recognise an AV-Nsp11N/CoV-Nsp15M domain in the interval Lys-2840 to Arg-2930. The 123-residue stretch at Leu-2932–Val-3054 folds into the NendoU domain. Catalysis depends on residues His-2963, His-2978, and Lys-3007.

It belongs to the arteriviridae polyprotein family. Nsp1 interacts with cellular transcription cofactor SND1/p100. In terms of processing, specific enzymatic cleavages in vivo by its own proteases yield mature proteins. There are two alternative pathways for processing. Either nsp4-5 is cleaved, which represents the major pathway or the nsp5-6 and nsp6-7 are processed, which represents the minor pathway. The major pathway occurs when nsp2 acts as a cofactor for nsp4.

It is found in the host nucleus. The protein resides in the host cytoplasm. Its subcellular location is the host membrane. It localises to the host perinuclear region. The enzyme catalyses RNA(n) + a ribonucleoside 5'-triphosphate = RNA(n+1) + diphosphate. It carries out the reaction ATP + H2O = ADP + phosphate + H(+). It catalyses the reaction Thiol-dependent hydrolysis of ester, thioester, amide, peptide and isopeptide bonds formed by the C-terminal Gly of ubiquitin (a 76-residue protein attached to proteins as an intracellular targeting signal).. The catalysed reaction is uridylyl-uridylyl-ribonucleotide-RNA = a 3'-end uridylyl-2',3'-cyclophospho-uridine-RNA + a 5'-end dephospho-ribonucleoside-RNA. Its function is as follows. The replicase polyprotein 1ab is a multifunctional protein: it contains the activities necessary for the transcription of negative stranded RNA, leader RNA, subgenomic mRNAs and progeny virion RNA as well as proteinases responsible for the cleavage of the polyprotein into functional products. In terms of biological role, nsp1 is essential for viral subgenomic mRNA synthesis. Nsp2 cysteine proteinase which cleaves the nsp2/nsp3 site in the polyprotein. Also displays deubiquitinating and deISGylase activities. The deubiquitinating activity cleaves both ubiquitinated and ISGylated products and may therefore regulate ubiquitin and ISG15 dependent host innate immunity. Functionally, the 3C-like serine proteinase chain is responsible for the majority of cleavages as it cleaves the C-terminus of the polyprotein. Its function is as follows. The helicase chain, which contains a zinc finger structure, displays RNA and DNA duplex-unwinding activities with 5' to 3' polarity. In terms of biological role, plays a role in viral transcription/replication and prevents the simultaneous activation of host cell dsRNA sensors, such as MDA5/IFIH1, OAS, and PKR. Acts by degrading the 5'-polyuridines generated during replication of the poly(A) region of viral genomic and subgenomic RNAs. Catalyzes a two-step reaction in which a 2'3'-cyclic phosphate (2'3'-cP) is first generated by 2'-O transesterification, which is then hydrolyzed to a 3'-phosphate (3'-P). If not degraded, poly(U) RNA would hybridize with poly(A) RNA tails and activate host dsRNA sensors. The sequence is that of Replicase polyprotein 1ab (rep) from Equidae (horses).